A 298-amino-acid chain; its full sequence is tRNA dimethylallyltransferase 2 (298 aa).

10-17 serves as a coordination point for ATP; sequence GPTASGKT. Substrate is bound at residue 12-17; sequence TASGKT. Residues 35–38 are interaction with substrate tRNA; that stretch reads DSRQ.

This sequence belongs to the IPP transferase family. As to quaternary structure, monomer. Mg(2+) serves as cofactor.

It carries out the reaction adenosine(37) in tRNA + dimethylallyl diphosphate = N(6)-dimethylallyladenosine(37) in tRNA + diphosphate. Its function is as follows. Catalyzes the transfer of a dimethylallyl group onto the adenine at position 37 in tRNAs that read codons beginning with uridine, leading to the formation of N6-(dimethylallyl)adenosine (i(6)A). The sequence is that of tRNA dimethylallyltransferase 2 from Syntrophotalea carbinolica (strain DSM 2380 / NBRC 103641 / GraBd1) (Pelobacter carbinolicus).